A 239-amino-acid chain; its full sequence is Pyridoxine 5'-phosphate synthase (239 aa).

N7 contributes to the 3-amino-2-oxopropyl phosphate binding site. Residue 9–10 (DH) participates in 1-deoxy-D-xylulose 5-phosphate binding. R18 contributes to the 3-amino-2-oxopropyl phosphate binding site. The active-site Proton acceptor is the H43. 1-deoxy-D-xylulose 5-phosphate is bound by residues R45 and H50. E70 functions as the Proton acceptor in the catalytic mechanism. T100 is a 1-deoxy-D-xylulose 5-phosphate binding site. Catalysis depends on H191, which acts as the Proton donor. Residues G192 and 213-214 (GH) contribute to the 3-amino-2-oxopropyl phosphate site.

Belongs to the PNP synthase family. As to quaternary structure, homooctamer; tetramer of dimers.

It localises to the cytoplasm. The catalysed reaction is 3-amino-2-oxopropyl phosphate + 1-deoxy-D-xylulose 5-phosphate = pyridoxine 5'-phosphate + phosphate + 2 H2O + H(+). It participates in cofactor biosynthesis; pyridoxine 5'-phosphate biosynthesis; pyridoxine 5'-phosphate from D-erythrose 4-phosphate: step 5/5. Functionally, catalyzes the complicated ring closure reaction between the two acyclic compounds 1-deoxy-D-xylulose-5-phosphate (DXP) and 3-amino-2-oxopropyl phosphate (1-amino-acetone-3-phosphate or AAP) to form pyridoxine 5'-phosphate (PNP) and inorganic phosphate. This is Pyridoxine 5'-phosphate synthase from Nostoc sp. (strain PCC 7120 / SAG 25.82 / UTEX 2576).